A 156-amino-acid polypeptide reads, in one-letter code: Calglandulin (156 aa).

4 EF-hand domains span residues 8–43 (EQITEYKGIFEMFDEEGNGLVKTDDLESLMSLIGIN), 44–79 (PTKRDLANMAKDVDKDKKGTFNCEGFLVLMGIYHEK), 82–117 (NQDEELRAAFKVFDKEHKGYIEWDTLKYVLMNAGEP), and 118–153 (LNEHEAELMMKEADKDGDGTIDYEEFVAMMTGESFK). Residues aspartate 131, aspartate 133, aspartate 135, threonine 137, and glutamate 142 each contribute to the Ca(2+) site.

Belongs to the calmodulin family. Calglandulin subfamily. As to expression, expressed by the venom gland.

The protein resides in the cytoplasm. Functionally, may be involved in the cellular control mechanism of the secretion of toxins from the gland into the venom. This chain is Calglandulin, found in Tropidechis carinatus (Australian rough-scaled snake).